The primary structure comprises 1408 residues: DNA-directed RNA polymerase subunit beta' (1408 aa).

4 residues coordinate Zn(2+): Cys-70, Cys-72, Cys-85, and Cys-88. Mg(2+) contacts are provided by Asp-460, Asp-462, and Asp-464. Cys-814, Cys-887, Cys-894, and Cys-897 together coordinate Zn(2+).

Belongs to the RNA polymerase beta' chain family. The RNAP catalytic core consists of 2 alpha, 1 beta, 1 beta' and 1 omega subunit. When a sigma factor is associated with the core the holoenzyme is formed, which can initiate transcription. Mg(2+) serves as cofactor. Zn(2+) is required as a cofactor.

The catalysed reaction is RNA(n) + a ribonucleoside 5'-triphosphate = RNA(n+1) + diphosphate. Functionally, DNA-dependent RNA polymerase catalyzes the transcription of DNA into RNA using the four ribonucleoside triphosphates as substrates. The chain is DNA-directed RNA polymerase subunit beta' from Hydrogenovibrio crunogenus (strain DSM 25203 / XCL-2) (Thiomicrospira crunogena).